The sequence spans 125 residues: Holo-[acyl-carrier-protein] synthase (125 aa).

Residues Asp7 and Glu56 each contribute to the Mg(2+) site.

The protein belongs to the P-Pant transferase superfamily. AcpS family. Mg(2+) serves as cofactor.

It is found in the cytoplasm. It carries out the reaction apo-[ACP] + CoA = holo-[ACP] + adenosine 3',5'-bisphosphate + H(+). Its function is as follows. Transfers the 4'-phosphopantetheine moiety from coenzyme A to a Ser of acyl-carrier-protein. The sequence is that of Holo-[acyl-carrier-protein] synthase from Chlamydia muridarum (strain MoPn / Nigg).